The primary structure comprises 64 residues: Large ribosomal subunit protein bL35 (64 aa).

Residues 1-23 (MPKMKTKSGAAKRFKKTANGFKH) are disordered.

It belongs to the bacterial ribosomal protein bL35 family.

The protein is Large ribosomal subunit protein bL35 of Stutzerimonas stutzeri (strain A1501) (Pseudomonas stutzeri).